The sequence spans 398 residues: MTRIEAVRYRPILDSRGNKTVEAEVTTDDGGFGRAAAPSGASTGEHEAVELPVGEAIAAGRERIAPRLEGREFAGDQRGVDAALHAADDTTDFSAVGANVAVATSMAAAKAAADVLGVHTYQHLGGALRGRNFPVPLGNVLGGGAHAADATAIQEFLVAATGAPSVRQAVFANAAVHQRVKDRLDDDGVPAAKGDEGAWAPSIDDATAFDVVAGAAAEVADEFGFDVRLGLDLAAAERYDGDEYVFGDDRRSTAAQIEYVAGLVSEYDLAYVEDPLDENDFEAFAELTDRVGDETLVCGDDLFVTNTERLQRGIDAGAANSILVKPNQIGTLTDAVDAIELATRNGYDAVVSHRSGETEDTTIAHLAVATDAPFIKTGAVGGERTAKLNELIRIADEA.

Gln154 serves as a coordination point for (2R)-2-phosphoglycerate. The Proton donor role is filled by Glu196. Residues Asp232, Glu273, and Asp300 each contribute to the Mg(2+) site. (2R)-2-phosphoglycerate-binding residues include Lys325, Arg354, Ser355, and Lys376. Catalysis depends on Lys325, which acts as the Proton acceptor.

Belongs to the enolase family. Requires Mg(2+) as cofactor.

It localises to the cytoplasm. It is found in the secreted. The protein localises to the cell surface. It catalyses the reaction (2R)-2-phosphoglycerate = phosphoenolpyruvate + H2O. It functions in the pathway carbohydrate degradation; glycolysis; pyruvate from D-glyceraldehyde 3-phosphate: step 4/5. Catalyzes the reversible conversion of 2-phosphoglycerate (2-PG) into phosphoenolpyruvate (PEP). It is essential for the degradation of carbohydrates via glycolysis. The chain is Enolase from Halobacterium salinarum (strain ATCC 700922 / JCM 11081 / NRC-1) (Halobacterium halobium).